The primary structure comprises 396 residues: MTVSIYLAKGRDKALRRRHPWIFSRGIDRIDGKAELGETVEIYANNGEWLARGAFSPQSQIRARVWTFDKNEAIDKDFFVRKLNQAQALRDVLAERDGLTGYRLIAAESDGLPGITIDRYQDYFVCQLLSAGAEATKDLLVEALVECYPDCNIYERSDVSVRKKEGLKQRTGVLHGEEPPESVVIEENGVKISVDIVNGHKTGFYLDQRDSRERACKYVKDKSVLNCFSYTGGFGLYALKGGAKHVINADVSQLALDTAKYNAEINKFDLSKAEFLNADVFKLLREYRDNGTKFDVVIMDPPKFAESKNQLTGACRGYKDINMLAMQILNPGGTLLTYSCSGLMDAGLFQKIVADAALDAHRTVQFIERFEQAADHPLDSAYPEGFYLKGFACRVV.

The PUA domain occupies threonine 2–arginine 81.

This sequence belongs to the methyltransferase superfamily. RlmI family.

The protein resides in the cytoplasm. The catalysed reaction is cytidine(1962) in 23S rRNA + S-adenosyl-L-methionine = 5-methylcytidine(1962) in 23S rRNA + S-adenosyl-L-homocysteine + H(+). Specifically methylates the cytosine at position 1962 (m5C1962) of 23S rRNA. The sequence is that of Ribosomal RNA large subunit methyltransferase I from Aliivibrio fischeri (strain MJ11) (Vibrio fischeri).